The following is a 252-amino-acid chain: 3-dehydroquinate dehydratase (252 aa).

Residues serine 21, 46 to 48 (EWR), and arginine 82 contribute to the 3-dehydroquinate site. The active-site Proton donor/acceptor is histidine 143. The active-site Schiff-base intermediate with substrate is lysine 170. 3-dehydroquinate-binding residues include arginine 213, serine 232, and glutamine 236.

Belongs to the type-I 3-dehydroquinase family. In terms of assembly, homodimer.

It catalyses the reaction 3-dehydroquinate = 3-dehydroshikimate + H2O. It functions in the pathway metabolic intermediate biosynthesis; chorismate biosynthesis; chorismate from D-erythrose 4-phosphate and phosphoenolpyruvate: step 3/7. In terms of biological role, involved in the third step of the chorismate pathway, which leads to the biosynthesis of aromatic amino acids. Catalyzes the cis-dehydration of 3-dehydroquinate (DHQ) and introduces the first double bond of the aromatic ring to yield 3-dehydroshikimate. This chain is 3-dehydroquinate dehydratase, found in Escherichia coli O17:K52:H18 (strain UMN026 / ExPEC).